The following is a 401-amino-acid chain: Phosphoglycerate kinase (401 aa).

Substrate-binding positions include Asp29–Asn31, Arg45, His69–Arg72, Arg125, and Arg158. ATP-binding positions include Lys209, Glu331, and Gly357 to Thr360.

Belongs to the phosphoglycerate kinase family. As to quaternary structure, monomer.

It localises to the cytoplasm. The enzyme catalyses (2R)-3-phosphoglycerate + ATP = (2R)-3-phospho-glyceroyl phosphate + ADP. It participates in carbohydrate degradation; glycolysis; pyruvate from D-glyceraldehyde 3-phosphate: step 2/5. The protein is Phosphoglycerate kinase of Wolinella succinogenes (strain ATCC 29543 / DSM 1740 / CCUG 13145 / JCM 31913 / LMG 7466 / NCTC 11488 / FDC 602W) (Vibrio succinogenes).